We begin with the raw amino-acid sequence, 192 residues long: Virion infectivity factor (192 aa).

The interval 14–17 (DRMR) is interaction with host APOBEC3F; F1-box. The tract at residues 40–44 (YRHHY) is interaction with host APOBEC3G; G-box. The tract at residues 54-72 (EVHIPLGEARLVVTTYWGL) is interaction with host APOBEC3F and APOBEC3G; FG-box. The interaction with host APOBEC3F; F2-box stretch occupies residues 74-79 (TGEKEW). The RNA-binding stretch occupies residues 75–114 (GEKEWHLGQGVSIEWRKRRYSTQVDPGLADQLIHMYYFDC). Residue T96 is modified to Phosphothreonine; by host MAP4K1. Residues H108, C114, C133, and H139 each coordinate Zn(2+). The HCCH motif signature appears at 108-139 (HMYYFDCFAESAIRKAILGHIVSPSCEYQAGH). Residue S144 is modified to Phosphoserine; by host. Positions 144-153 (SLQYLALAAL) match the BC-box-like motif motif. The interval 151 to 164 (AALIAPKKIKPPLP) is multimerization. The SOCS box-like stretch occupies residues 151–180 (AALIAPKKIKPPLPSVRKLTEDRWNKPQKT). S165 is modified (phosphoserine; by host MAP4K1). The disordered stretch occupies residues 165 to 192 (SVRKLTEDRWNKPQKTKGRRGSHTMNGH). The interval 171 to 172 (ED) is membrane association. Positions 176–186 (KPQKTKGRRGS) are enriched in basic residues. At T188 the chain carries Phosphothreonine; by host.

Belongs to the primate lentivirus group Vif protein family. Homomultimer; in vitro and presumably in vivo. Interacts with viral RNA and Pr55Gag precursor; these interactions mediate Vif incorporation into the virion. Interacts with the viral reverse transcriptase. Forms cullin-5-RING E3 ubiquitin-protein ligase complex (ECS complex) by interacting with host CUL5, RBX2, elongin BC complex (ELOB and ELOC) and CBFB/CBF-beta. Within the ECS complex, Vif interacts directly with host CUL5, ELOC and APOBEC (APOBEC3F and APOBEC3G) substrates. The ECS complex also contains some single-stranded RNA (ssRNA) that acts as a glue that bridges Vif with APOBEC (APOBEC3F and APOBEC3G) substrates. Interacts with host UBCE7IP1 isoform 3/ZIN and possibly with SAT. Interacts with host tyrosine kinases HCK and FYN; these interactions may decrease level of phosphorylated APOBEC3G incorporation into virions. Interacts with host ABCE1; this interaction may play a role in protecting viral RNA from damage during viral assembly. Interacts with host MDM2; this interaction targets Vif for degradation by the proteasome. Processed in virion by the viral protease. In terms of processing, highly phosphorylated on serine and threonine residues. Post-translationally, polyubiquitinated and degraded by the proteasome in the presence of APOBEC3G.

It is found in the host cytoplasm. The protein resides in the host cell membrane. It localises to the virion. Its function is as follows. Counteracts the innate antiviral activity of host APOBEC3F and APOBEC3G by promoting their ubiquitination and degradation. Acts as a substrate recognition component of an E3 ubiquitin-protein ligase complex: mechanistically, Vif hijacks a host cullin-5-RING E3 ubiquitin-protein ligase complex (ECS complex) and the transcription coactivator CBFB/CBF-beta to form an active E3 ubiquitin-protein ligase complex that targets APOBEC3G and APOBEC3F for polyubiquitination, leading to their degradation by the proteasome. Vif interaction with APOBEC3G also blocks its cytidine deaminase activity in a proteasome-independent manner, suggesting a dual inhibitory mechanism. May interact directly with APOBEC3G mRNA in order to inhibit its translation. Association with CBFB/CBF-beta also inhibits the transcription coactivator activity of CBFB/CBF-beta. Seems to play a role in viral morphology by affecting the stability of the viral nucleoprotein core. Finally, Vif also contributes to the G2 cell cycle arrest observed in HIV infected cells. This Human immunodeficiency virus type 1 group M subtype D (isolate NDK) (HIV-1) protein is Virion infectivity factor.